The primary structure comprises 455 residues: 3-isopropylmalate dehydratase large subunit (455 aa).

[4Fe-4S] cluster contacts are provided by C336, C396, and C399.

The protein belongs to the aconitase/IPM isomerase family. LeuC type 1 subfamily. As to quaternary structure, heterodimer of LeuC and LeuD. [4Fe-4S] cluster serves as cofactor.

The enzyme catalyses (2R,3S)-3-isopropylmalate = (2S)-2-isopropylmalate. It participates in amino-acid biosynthesis; L-leucine biosynthesis; L-leucine from 3-methyl-2-oxobutanoate: step 2/4. In terms of biological role, catalyzes the isomerization between 2-isopropylmalate and 3-isopropylmalate, via the formation of 2-isopropylmaleate. The polypeptide is 3-isopropylmalate dehydratase large subunit (Staphylococcus aureus (strain MRSA252)).